The sequence spans 124 residues: Ribonuclease P protein component (124 aa).

Belongs to the RnpA family. In terms of assembly, consists of a catalytic RNA component (M1 or rnpB) and a protein subunit.

It carries out the reaction Endonucleolytic cleavage of RNA, removing 5'-extranucleotides from tRNA precursor.. Functionally, RNaseP catalyzes the removal of the 5'-leader sequence from pre-tRNA to produce the mature 5'-terminus. It can also cleave other RNA substrates such as 4.5S RNA. The protein component plays an auxiliary but essential role in vivo by binding to the 5'-leader sequence and broadening the substrate specificity of the ribozyme. This is Ribonuclease P protein component from Synechocystis sp. (strain ATCC 27184 / PCC 6803 / Kazusa).